A 325-amino-acid polypeptide reads, in one-letter code: Tagatose 1,6-diphosphate aldolase 1 (325 aa).

Belongs to the aldolase LacD family.

The enzyme catalyses D-tagatofuranose 1,6-bisphosphate = D-glyceraldehyde 3-phosphate + dihydroxyacetone phosphate. Its pathway is carbohydrate metabolism; D-tagatose 6-phosphate degradation; D-glyceraldehyde 3-phosphate and glycerone phosphate from D-tagatose 6-phosphate: step 2/2. The protein is Tagatose 1,6-diphosphate aldolase 1 (lacD1) of Streptococcus mutans serotype c (strain ATCC 700610 / UA159).